Reading from the N-terminus, the 507-residue chain is 2,3-bisphosphoglycerate-independent phosphoglycerate mutase (507 aa).

Positions 11 and 61 each coordinate Mn(2+). Ser61 serves as the catalytic Phosphoserine intermediate. Residues His122, 150–151, Arg182, Arg188, 257–260, and Lys332 each bind substrate; these read RD and RPDR. Mn(2+) contacts are provided by Asp397, His401, Asp438, His439, and His456.

The protein belongs to the BPG-independent phosphoglycerate mutase family. As to quaternary structure, monomer. Mn(2+) is required as a cofactor.

The enzyme catalyses (2R)-2-phosphoglycerate = (2R)-3-phosphoglycerate. It participates in carbohydrate degradation; glycolysis; pyruvate from D-glyceraldehyde 3-phosphate: step 3/5. In terms of biological role, catalyzes the interconversion of 2-phosphoglycerate and 3-phosphoglycerate. This is 2,3-bisphosphoglycerate-independent phosphoglycerate mutase from Mycoplasma genitalium (strain ATCC 33530 / DSM 19775 / NCTC 10195 / G37) (Mycoplasmoides genitalium).